The following is a 273-amino-acid chain: 6-carboxyhexanoate--CoA ligase (273 aa).

Belongs to the BioW family. Homodimer. The cofactor is Mg(2+).

The enzyme catalyses heptanedioate + ATP + CoA = 6-carboxyhexanoyl-CoA + AMP + diphosphate. The protein operates within metabolic intermediate metabolism; pimeloyl-CoA biosynthesis; pimeloyl-CoA from pimelate: step 1/1. In terms of biological role, catalyzes the transformation of pimelate into pimeloyl-CoA with concomitant hydrolysis of ATP to AMP. This Alkalihalophilus pseudofirmus (strain ATCC BAA-2126 / JCM 17055 / OF4) (Bacillus pseudofirmus) protein is 6-carboxyhexanoate--CoA ligase.